Here is a 172-residue protein sequence, read N- to C-terminus: uncharacterized protein (172 aa).

An N-terminal signal peptide occupies residues 1–22 (MKLFQLLLLVLTISSFIISNNG). Over 23–140 (LVESHQGRMH…FSYENSSNET (118 aa)) the chain is Extracellular. The segment at 27-69 (HQGRMHRGSGERHHRAGGNQQQPQPPSEQQVESSYNSNDDGSS) is disordered. Residues 29–42 (GRMHRGSGERHHRA) are compositionally biased toward basic residues. The segment covering 53–69 (SEQQVESSYNSNDDGSS) has biased composition (low complexity). N-linked (GlcNAc...) asparagine glycans are attached at residues asparagine 135 and asparagine 138. A helical membrane pass occupies residues 141–161 (IVIYINPVTLVFTLVLLLTFI). Over 162–172 (VLTITQSLRKY) the chain is Cytoplasmic.

The protein localises to the membrane. This is an uncharacterized protein from Dictyostelium discoideum (Social amoeba).